A 61-amino-acid polypeptide reads, in one-letter code: DNA gyrase inhibitor YacG (61 aa).

Zn(2+)-binding residues include Cys14, Cys17, Cys29, and Cys33.

It belongs to the DNA gyrase inhibitor YacG family. Interacts with GyrB. Zn(2+) is required as a cofactor.

Its function is as follows. Inhibits all the catalytic activities of DNA gyrase by preventing its interaction with DNA. Acts by binding directly to the C-terminal domain of GyrB, which probably disrupts DNA binding by the gyrase. The polypeptide is DNA gyrase inhibitor YacG (Zymomonas mobilis subsp. mobilis (strain ATCC 31821 / ZM4 / CP4)).